The following is a 31-amino-acid chain: MSDIN-like toxin proprotein 4 (31 aa).

A propeptide spanning residues 1 to 10 (MSDINGTRLP) is cleaved from the precursor. A cross-link (cyclopeptide (Trp-Pro)) is located at residues 11 to 16 (WLATCP). Positions 17-31 (CVGEDVNPTLSRGER) are excised as a propeptide.

This sequence belongs to the MSDIN fungal toxin family. Post-translationally, processed by the macrocyclase-peptidase enzyme POPB to yield a toxic cyclic hexapeptide. POPB first removes 10 residues from the N-terminus. Conformational trapping of the remaining peptide forces the enzyme to release this intermediate rather than proceed to macrocyclization. The enzyme rebinds the remaining peptide in a different conformation and catalyzes macrocyclization of the N-terminal 6 residues.

Functionally, probable toxin that belongs to the MSDIN-like toxin family responsible for a large number of food poisoning cases and deaths. The chain is MSDIN-like toxin proprotein 4 from Amanita phalloides (Death cap).